The following is a 532-amino-acid chain: MIKKIILFFAVLIAIVIGQQPLNVVPYPQQVSIGTCVIPVAPGSILIESNIESATFSVSMDRYTNLFFPFSNESEPSSNESFLLSVTIYSDDETLQLGIDESYSLSIEQGSYQLKATNIYGAMRGLETFKQLIVYNELENSYSIVCVSISDSPRYPWRGFMVDSARHYIPKNMILHMIDSLGFSKFNTLHWHMVDAVAFPVESTTYPDLTKGAFSPSATFSHDDIQEVVAYAKTYGIRVIPEFDIPGHAAAWGIGYPELVATCPDYAANVNNIPLDISNPATFTFIQNLFTEIAPLFIDNYFHTGGDELVTGCWLEDPAIANWMTKMGFSTTDAFQYFENNLDVTMKSINRTKITWNDPIDYGVQLNPETLVQVWSSGSDLQGIVNSGYKALVSFAWYLDKQNPDNNIHYEWQDTWQDFYAADPTNNISTNAENIIGGEATMWAEQINQVNWDVRVWPRAIGIAERLWSAQSVNSVSLALPRIGHFTCDLSRRGIQSGPLFPDYCPMQDDLVFTMKPNTKLSKSEIKLILNK.

The first 18 residues, 1–18 (MIKKIILFFAVLIAIVIG), serve as a signal peptide directing secretion. Residues asparagine 72 and asparagine 79 are each glycosylated (N-linked (GlcNAc...) asparagine). Glutamate 308 acts as the Proton donor in catalysis. Residues asparagine 350 and asparagine 427 are each glycosylated (N-linked (GlcNAc...) asparagine).

It belongs to the glycosyl hydrolase 20 family. Dimer. The N-terminus is blocked. In terms of processing, N-glycosylated.

The protein resides in the lysosome. It carries out the reaction Hydrolysis of terminal non-reducing N-acetyl-D-hexosamine residues in N-acetyl-beta-D-hexosaminides.. Functionally, responsible for the degradation of GM2 gangliosides, and a variety of other molecules containing terminal N-acetyl hexosamines. This enzyme plays a role during the slug stage of development in the maintenance of pseudoplasmodia of normal size. This chain is Beta-hexosaminidase subunit A1 (hexa1), found in Dictyostelium discoideum (Social amoeba).